The following is a 165-amino-acid chain: MRIDTSALCDIYSDQVDVVEPIFSSFGGASSFYGKITTVKCFESNGLIASVLEEEGQGRVLLIDGGGAVRRALIDAELAQLALDNGWEGIIVYGAVRQLDVLETLDIGIHALAPIPVGADDNEIGEVDTPVNFGGVTFFPEDYVYADLTGIILSPELLDLAELEE.

The protein belongs to the RraA family. Homotrimer. Binds to both RNA-binding sites in the C-terminal region of Rne and to RhlB.

Its subcellular location is the cytoplasm. Its function is as follows. Globally modulates RNA abundance by binding to RNase E (Rne) and regulating its endonucleolytic activity. Can modulate Rne action in a substrate-dependent manner by altering the composition of the degradosome. Modulates RNA-binding and helicase activities of the degradosome. The protein is Regulator of ribonuclease activity A of Actinobacillus pleuropneumoniae serotype 5b (strain L20).